The sequence spans 394 residues: Probable sugar efflux transporter (394 aa).

12 helical membrane passes run 15–35 (VLML…PVGL), 50–70 (VGLM…PMML), 79–99 (MLLM…SVAW), 109–129 (IGIA…AIRV), 137–157 (QALS…LPIG), 168–188 (ITFA…LKLL), 209–229 (PALV…YTAY), 249–269 (FLLL…SIYG), 272–292 (FPAT…MCLY), 299–319 (LAVS…GLAV), 333–353 (VAMS…ALLG), and 362–382 (MASV…WCAW).

The protein belongs to the major facilitator superfamily. SotB (TC 2.A.1.2) family.

The protein resides in the cell inner membrane. Functionally, involved in the efflux of sugars. The physiological role may be the reduction of the intracellular concentration of toxic sugars or sugar metabolites. The sequence is that of Probable sugar efflux transporter from Erwinia tasmaniensis (strain DSM 17950 / CFBP 7177 / CIP 109463 / NCPPB 4357 / Et1/99).